A 333-amino-acid polypeptide reads, in one-letter code: Cytochrome c oxidase assembly protein COX18, mitochondrial (333 aa).

The chain crosses the membrane as a helical span at residues 168–188 (FKATVLVWIQLPMWIFMSFAL). Residues 189-223 (RNLSTGAAHSEGFSVQEQLATGGILWFPDLTAPDS) are Mitochondrial matrix-facing. Residues 224 to 244 (TWILPISVGVINLLIVEICAL) form a helical membrane-spanning segment. The Mitochondrial intermembrane portion of the chain corresponds to 245-262 (QKIGMSRFQTYITYFVRA). Residues 263–283 (MSVLMIPIAATVPSSIVLYWL) traverse the membrane as a helical segment. The Mitochondrial matrix segment spans residues 284–333 (CSSFVGLSQNLLLRSPGFRQLCRIPSTKSDSETPYKDIFAAFNTKFISRK).

The protein belongs to the OXA1/ALB3/YidC family. Found in a complex with TMEM177, COA6, MT-CO2/COX2, COX20, SCO1 and SCO2. Interacts transiently with MT-CO2/COX2 during its maturation. Interacts with COX20 in a MT-CO2/COX2-dependent manner.

It localises to the mitochondrion inner membrane. Its function is as follows. Mitochondrial membrane insertase required for the translocation of the C-terminus of cytochrome c oxidase subunit II (MT-CO2/COX2) across the mitochondrial inner membrane. Plays a role in MT-CO2/COX2 maturation following the COX20-mediated stabilization of newly synthesized MT-CO2/COX2 protein and before the action of the metallochaperones SCO1/2. Essential for the assembly and stability of the mitochondrial respiratory chain complex IV (also known as cytochrome c oxidase). The protein is Cytochrome c oxidase assembly protein COX18, mitochondrial (COX18) of Homo sapiens (Human).